The chain runs to 795 residues: Phospholipase A-2-activating protein (795 aa).

WD repeat units follow at residues 17-56, 63-107, 110-148, 149-188, 190-227, 229-268, and 270-307; these read HELD…RSFT, GHSN…PLYI, GHKN…MTLQ, GHTA…RTFS, HEDC…LEVY, GHTN…QTIR, and PAQS…TASA. Phosphoserine is present on Ser50. The 100-residue stretch at 366–465 folds into the PFU domain; it reads QWSVSEGRWI…KGQMLGLGNP (100 aa). Lys529 carries the N6-acetyllysine modification. The 262-residue stretch at 533–794 folds into the PUL domain; the sequence is IYFPKKEAVT…SECCRFILNL (262 aa). ARM repeat units lie at residues 546–588, 589–620, 621–669, 670–715, 716–755, and 756–795; these read ANPT…NSSS, EKPT…LRLS, IKHP…CFVG, QAGQ…CFHK, DHNI…LISD, and DSNA…LNLL.

This sequence belongs to the WD repeat PLAP family. Interacts with ubiquitin. Interacts with UBXN6, VCP and YOD1; may form a complex involved in macroautophagy.

It is found in the nucleus. The protein resides in the cytoplasm. It localises to the synapse. In terms of biological role, plays a role in protein ubiquitination, sorting and degradation through its association with VCP. Involved in ubiquitin-mediated membrane proteins trafficking to late endosomes in an ESCRT-dependent manner, and hence plays a role in synaptic vesicle recycling. May play a role in macroautophagy, regulating for instance the clearance of damaged lysosomes. Plays a role in cerebellar Purkinje cell development. Positively regulates cytosolic and calcium-independent phospholipase A2 activities in a tumor necrosis factor alpha (TNF-alpha)- or lipopolysaccharide (LPS)-dependent manner, and hence prostaglandin E2 biosynthesis. This chain is Phospholipase A-2-activating protein (PLAA), found in Homo sapiens (Human).